The chain runs to 338 residues: MSNEKIAILGPGSWGTALAQVLNDNGHQVCLWGDSQEQIDEINQKHTNTRYFKDIVIDEKIKATTDLKEALKDANAILFVVPTKVTRLVAKQVAETLDHKVIMMHASKGLEPGTHERLSTVISEEVPAELRSEIVVVSGPSHAEETIVRDITLITAASRDLEAAKYVQALFSNHYFRLYTNSDVIGVETAGALKNIIAVGAGALHGLGYGDNAKAAVITRGLAEITRLGVKLGADPLTYSGLSGVGDLIVTGTSVHSRNWRAGDALGRGEKLEDIERNMGMVIEGISTTKVAYEIAQELGVYMPITTAIYKSIYEGAGIKESILGMMSNEFRSENEWH.

Residues S13, W14, and K108 each contribute to the NADPH site. Residues K108, G139, and S141 each contribute to the sn-glycerol 3-phosphate site. Residue A143 coordinates NADPH. K194, D247, S257, R258, and N259 together coordinate sn-glycerol 3-phosphate. Catalysis depends on K194, which acts as the Proton acceptor. R258 is a binding site for NADPH. NADPH-binding residues include V282 and E284.

This sequence belongs to the NAD-dependent glycerol-3-phosphate dehydrogenase family.

The protein resides in the cytoplasm. It carries out the reaction sn-glycerol 3-phosphate + NAD(+) = dihydroxyacetone phosphate + NADH + H(+). It catalyses the reaction sn-glycerol 3-phosphate + NADP(+) = dihydroxyacetone phosphate + NADPH + H(+). It participates in membrane lipid metabolism; glycerophospholipid metabolism. Catalyzes the reduction of the glycolytic intermediate dihydroxyacetone phosphate (DHAP) to sn-glycerol 3-phosphate (G3P), the key precursor for phospholipid synthesis. This chain is Glycerol-3-phosphate dehydrogenase [NAD(P)+], found in Streptococcus uberis (strain ATCC BAA-854 / 0140J).